The sequence spans 432 residues: Probable M18 family aminopeptidase 2 (432 aa).

H86, H157, and H408 together coordinate Zn(2+).

Belongs to the peptidase M18 family. It depends on Zn(2+) as a cofactor.

The polypeptide is Probable M18 family aminopeptidase 2 (Streptomyces avermitilis (strain ATCC 31267 / DSM 46492 / JCM 5070 / NBRC 14893 / NCIMB 12804 / NRRL 8165 / MA-4680)).